Here is a 166-residue protein sequence, read N- to C-terminus: SsrA-binding protein (166 aa).

A disordered region spans residues 143 to 166 (HDKREDDKRKQANRDMKSALARYR). Residues 144–159 (DKREDDKRKQANRDMK) are compositionally biased toward basic and acidic residues.

The protein belongs to the SmpB family.

Its subcellular location is the cytoplasm. Required for rescue of stalled ribosomes mediated by trans-translation. Binds to transfer-messenger RNA (tmRNA), required for stable association of tmRNA with ribosomes. tmRNA and SmpB together mimic tRNA shape, replacing the anticodon stem-loop with SmpB. tmRNA is encoded by the ssrA gene; the 2 termini fold to resemble tRNA(Ala) and it encodes a 'tag peptide', a short internal open reading frame. During trans-translation Ala-aminoacylated tmRNA acts like a tRNA, entering the A-site of stalled ribosomes, displacing the stalled mRNA. The ribosome then switches to translate the ORF on the tmRNA; the nascent peptide is terminated with the 'tag peptide' encoded by the tmRNA and targeted for degradation. The ribosome is freed to recommence translation, which seems to be the essential function of trans-translation. The polypeptide is SsrA-binding protein (Prochlorococcus marinus (strain MIT 9211)).